The chain runs to 1001 residues: Serine/threonine-protein kinase TAO1-A (1001 aa).

The Protein kinase domain maps to 28–281; sequence FSDLREIGHG…SDELLKNMFV (254 aa). Residues 34–42 and K57 contribute to the ATP site; that span reads IGHGSFGAV. The active-site Proton acceptor is the D151. Disordered regions lie at residues 324 to 431 and 567 to 586; these read PAVE…HKSH and KEEL…EWLS. The segment covering 350–370 has biased composition (low complexity); it reads SNQSIPSMSISASSQSSSVTS. Composition is skewed to basic and acidic residues over residues 375-388 and 577-586; these read SDDK…EGDH and PKKEKQEWLS. Coiled coils occupy residues 458–651 and 754–877; these read SELR…EHAM and KAVL…EIEA. Positions 911 to 1001 are disordered; the sequence is SHNPTGGPGP…ISNGSRMSYT (91 aa). Low complexity predominate over residues 921–930; the sequence is HWGHPMAGPP. Composition is skewed to polar residues over residues 949–967 and 974–1001; these read GSVQ…NSPQ and SGGQ…MSYT.

The protein belongs to the protein kinase superfamily. STE Ser/Thr protein kinase family. STE20 subfamily.

Its subcellular location is the cytoplasm. It catalyses the reaction L-seryl-[protein] + ATP = O-phospho-L-seryl-[protein] + ADP + H(+). It carries out the reaction L-threonyl-[protein] + ATP = O-phospho-L-threonyl-[protein] + ADP + H(+). In terms of biological role, serine/threonine-protein kinase involved in various processes such as p38/mapk14 stress-activated MAPK cascade, DNA damage response and regulation of cytoskeleton stability. Acts as an activator of the p38/MAPK14 stress-activated MAPK cascade by mediating phosphorylation and subsequent activation of upstream MAP kinase kinases. In response to DNA damage, involved in the G2/M transition DNA damage checkpoint by activating the p38/MAPK14 stress-activated MAPK cascade. This Xenopus laevis (African clawed frog) protein is Serine/threonine-protein kinase TAO1-A (taok1-a).